Here is a 299-residue protein sequence, read N- to C-terminus: ATP phosphoribosyltransferase (299 aa).

This sequence belongs to the ATP phosphoribosyltransferase family. Long subfamily. It depends on Mg(2+) as a cofactor.

Its subcellular location is the cytoplasm. It carries out the reaction 1-(5-phospho-beta-D-ribosyl)-ATP + diphosphate = 5-phospho-alpha-D-ribose 1-diphosphate + ATP. Its pathway is amino-acid biosynthesis; L-histidine biosynthesis; L-histidine from 5-phospho-alpha-D-ribose 1-diphosphate: step 1/9. Its activity is regulated as follows. Feedback inhibited by histidine. Functionally, catalyzes the condensation of ATP and 5-phosphoribose 1-diphosphate to form N'-(5'-phosphoribosyl)-ATP (PR-ATP). Has a crucial role in the pathway because the rate of histidine biosynthesis seems to be controlled primarily by regulation of HisG enzymatic activity. This is ATP phosphoribosyltransferase from Shewanella sp. (strain MR-7).